The sequence spans 306 residues: Elongation factor Ts (306 aa).

The tract at residues 80–83 (TDFV) is involved in Mg(2+) ion dislocation from EF-Tu.

This sequence belongs to the EF-Ts family.

The protein localises to the cytoplasm. Its function is as follows. Associates with the EF-Tu.GDP complex and induces the exchange of GDP to GTP. It remains bound to the aminoacyl-tRNA.EF-Tu.GTP complex up to the GTP hydrolysis stage on the ribosome. This is Elongation factor Ts from Methylorubrum extorquens (strain CM4 / NCIMB 13688) (Methylobacterium extorquens).